We begin with the raw amino-acid sequence, 89 residues long: MFIGTIILVLSFLGFVFNRRNIILAFICLETMLLGINLILLRNSVLFDDISGSLFAIVIIILAGVESAIGLSLLVSYYRLRGVINSYGI.

Transmembrane regions (helical) follow at residues 21–41 and 55–75; these read NIIL…LILL and FAIV…SLLV.

This sequence belongs to the complex I subunit 4L family. Complex I is composed of 37 different subunits.

It localises to the mitochondrion membrane. It catalyses the reaction a ubiquinone + NADH + 5 H(+)(in) = a ubiquinol + NAD(+) + 4 H(+)(out). Core subunit of the mitochondrial membrane respiratory chain NADH dehydrogenase (Complex I) that is believed to belong to the minimal assembly required for catalysis. Complex I functions in the transfer of electrons from NADH to the respiratory chain. The immediate electron acceptor for the enzyme is believed to be ubiquinone. This is NADH-ubiquinone oxidoreductase chain 4L (ND4L) from Yarrowia lipolytica (strain CLIB 122 / E 150) (Yeast).